The following is a 600-amino-acid chain: NADPH-dependent diflavin oxidoreductase 1 (600 aa).

The Flavodoxin-like domain occupies 6–150; that stretch reads LLILYGSQTG…VVDPWLKDLW (145 aa). FMN-binding positions include 12-17, 59-62, 97-106, and aspartate 132; these read SQTGTA, ATTG, and LGDSSYPKFN. In terms of domain architecture, FAD-binding FR-type spans 210 to 449; the sequence is IHPFLAPVLS…WVKKGSMKFP (240 aa). FAD is bound by residues arginine 354, 386–389, and 420–423; these read RAFS and GLCS. Residues threonine 463, 518 to 519, and 524 to 528 each bind NADP(+); these read SR and KIYVQ. Tryptophan 599 is an FAD binding site.

Belongs to the NADPH-dependent diflavin oxidoreductase NDOR1 family. This sequence in the N-terminal section; belongs to the flavodoxin family. The protein in the C-terminal section; belongs to the flavoprotein pyridine nucleotide cytochrome reductase family. As to quaternary structure, interacts with ciapin1; as part of the cytosolic iron-sulfur (Fe-S) protein assembly (CIA) machinery. FAD serves as cofactor. FMN is required as a cofactor.

It is found in the cytoplasm. The protein resides in the perinuclear region. The enzyme catalyses 2 oxidized [2Fe-2S]-[protein] + NADPH = 2 reduced [2Fe-2S]-[protein] + NADP(+) + H(+). In terms of biological role, NADPH-dependent reductase which is a central component of the cytosolic iron-sulfur (Fe-S) protein assembly (CIA) machinery. Transfers electrons from NADPH via its FAD and FMN prosthetic groups to the [2Fe-2S] cluster of ciapin1, another key component of the CIA machinery. In turn, this reduced cluster provides electrons for assembly of cytosolic iron-sulfur cluster proteins. It can also reduce the [2Fe-2S] cluster of cisd1 and activate this protein implicated in Fe/S cluster repair. The polypeptide is NADPH-dependent diflavin oxidoreductase 1 (Xenopus laevis (African clawed frog)).